Consider the following 199-residue polypeptide: Zinc finger matrin-type protein 2 (199 aa).

A2 is modified (N-acetylalanine). Glycyl lysine isopeptide (Lys-Gly) (interchain with G-Cter in SUMO2) cross-links involve residues K8, K36, K39, K45, K55, K61, K64, K70, K102, and K123. Residues 27-46 form a disordered region; that stretch reads KRLTEEREKKDGKPVQPVKR. Residues 80–104 form a Matrin-type zinc finger; the sequence is YYCNVCDCVVKDSINFLDHINGKKH. Residues 150-173 show a composition bias toward basic and acidic residues; that stretch reads REEEEKAKAYKKEKQKEKKRRAEE. The tract at residues 150 to 175 is disordered; that stretch reads REEEEKAKAYKKEKQKEKKRRAEEDL.

Component of the spliceosome B complex.

Its subcellular location is the nucleus. In terms of biological role, involved in pre-mRNA splicing as a component of the spliceosome. The protein is Zinc finger matrin-type protein 2 (ZMAT2) of Homo sapiens (Human).